The following is a 704-amino-acid chain: Polyribonucleotide nucleotidyltransferase (704 aa).

2 residues coordinate Mg(2+): D488 and D494. Residues 555 to 614 form the KH domain; that stretch reads PRITTLKINPEKIRDVIGKGGATIRALTEETGTTIELEDDGTVKIASANGDATKEAIRRI. The S1 motif domain occupies 624 to 692; it reads GTIYNGKVVR…RQGRVRLSMK (69 aa).

This sequence belongs to the polyribonucleotide nucleotidyltransferase family. As to quaternary structure, component of the RNA degradosome, which is a multiprotein complex involved in RNA processing and mRNA degradation. It depends on Mg(2+) as a cofactor.

The protein resides in the cytoplasm. It catalyses the reaction RNA(n+1) + phosphate = RNA(n) + a ribonucleoside 5'-diphosphate. Functionally, involved in mRNA degradation. Catalyzes the phosphorolysis of single-stranded polyribonucleotides processively in the 3'- to 5'-direction. This is Polyribonucleotide nucleotidyltransferase from Shewanella sediminis (strain HAW-EB3).